Here is a 2282-residue protein sequence, read N- to C-terminus: Cation channel sperm-associated targeting subunit tau (2282 aa).

Positions 1 to 118 (MELPPPGNRR…RGKGKGTGTR (118 aa)) are disordered. 2 stretches are compositionally biased toward polar residues: residues 11–41 (VSIN…SLKR) and 50–87 (MMSN…NLSS). A compositionally biased stretch (basic and acidic residues) spans 90-109 (YADEEGKPLTDKNKDKDKGR). The 136-residue stretch at 131-266 (QSDEMAIANQ…IQKGCFTEVM (136 aa)) folds into the C2 domain. Disordered regions lie at residues 397–416 (MTKR…SSAL), 656–679 (EHED…TWAE), 747–1066 (NKLI…SHDP), 1104–1153 (SAKS…DKQS), 1217–1240 (YTND…TDDR), 1426–1445 (NSLL…DSRS), 1452–1515 (RQNT…SLDK), 1542–1569 (ERRQ…LEKT), 1908–1928 (NQAN…LKKQ), and 2187–2222 (PKKS…EPNK). 5 stretches are compositionally biased toward polar residues: residues 750–760 (ITDSSFNTTKP), 783–792 (SDPSSNTTKP), 800–841 (DPSS…SDLN), 849–858 (IVSTISSDPN), and 953–974 (SARS…TKLS). The span at 1104–1123 (SAKSLDSNNSSASSSPTVNS) shows a compositional bias: low complexity. A compositionally biased stretch (polar residues) spans 1124–1136 (DTTTNAAEPSGTK). Polar residues-rich tracts occupy residues 1452–1466 (RQNT…SSVS) and 1473–1482 (DCQSISTQES). Positions 1484–1493 (YPVRDTKSDS) are enriched in basic and acidic residues. A compositionally biased stretch (acidic residues) spans 1495–1504 (NDTEEMELDS). 2 stretches are compositionally biased toward basic and acidic residues: residues 1542–1555 (ERRQ…ESLI) and 1916–1925 (SPERPSDISL).

As to quaternary structure, component of the CatSper complex or CatSpermasome composed of the core pore-forming members CATSPER1, CATSPER2, CATSPER3 and CATSPER4 as well as auxiliary members CATSPERB, CATSPERG, CATSPERD, CATSPERE, CATSPERZ, C2CD6/CATSPERT, SLCO6C1, TMEM249, TMEM262 and EFCAB9. HSPA1 may be an additional auxiliary complex member. The core complex members CATSPER1, CATSPER2, CATSPER3 and CATSPER4 form a heterotetrameric channel. The auxiliary CATSPERB, CATSPERG, CATSPERD and CATSPERE subunits form a pavilion-like structure over the pore which stabilizes the complex through interactions with CATSPER4, CATSPER3, CATSPER1 and CATSPER2 respectively. SLCO6C1 interacts with CATSPERE and TMEM262/CATSPERH interacts with CATSPERB, further stabilizing the complex. C2CD6/CATSPERT interacts at least with CATSPERD and is required for targeting the CatSper complex in the flagellar membrane. Expressed in cauda sperm (at protein level).

The protein resides in the cell projection. It is found in the cilium. The protein localises to the flagellum membrane. In terms of biological role, auxiliary component of the CatSper complex, a complex involved in sperm cell hyperactivation. Sperm cell hyperactivation is needed for sperm motility which is essential late in the preparation of sperm for fertilization. Required for CatSper complex targeting and trafficking into the quadrilinear nanodomains. Targets the preassembled CatSper complexes to elongating flagella, where it links the channel-carrying vesicles and motor proteins. This chain is Cation channel sperm-associated targeting subunit tau, found in Mus musculus (Mouse).